Reading from the N-terminus, the 188-residue chain is RWD domain-containing protein 4 (188 aa).

The residue at position 2 (Ser-2) is an N-acetylserine. In terms of domain architecture, RWD spans 9 to 111; sequence MELEALRSIY…EYAKDNKEQF (103 aa). The tract at residues 132–167 is disordered; that stretch reads TPNTAPSSKKKDKKEQLSKAQKRKLADKTDHKGELP. A compositionally biased stretch (basic and acidic residues) spans 155-166; it reads KLADKTDHKGEL.

The protein is RWD domain-containing protein 4 (RWDD4) of Homo sapiens (Human).